Here is a 273-residue protein sequence, read N- to C-terminus: uncharacterized protein (273 aa).

This is an uncharacterized protein from Mycobacterium bovis (strain ATCC BAA-935 / AF2122/97).